The sequence spans 326 residues: Methionine import ATP-binding protein MetN (326 aa).

Residues 1–226 enclose the ABC transporter domain; the sequence is MVFYTIGPQT…PQQPITRQFV (226 aa). 23–30 is an ATP binding site; sequence GYSGAGKS.

It belongs to the ABC transporter superfamily. Methionine importer (TC 3.A.1.24) family. As to quaternary structure, the complex is composed of two ATP-binding proteins (MetN), two transmembrane proteins (MetI) and a solute-binding protein (MetQ).

The protein localises to the cell inner membrane. It catalyses the reaction L-methionine(out) + ATP + H2O = L-methionine(in) + ADP + phosphate + H(+). It carries out the reaction D-methionine(out) + ATP + H2O = D-methionine(in) + ADP + phosphate + H(+). Functionally, part of the ABC transporter complex MetNIQ involved in methionine import. Responsible for energy coupling to the transport system. The sequence is that of Methionine import ATP-binding protein MetN from Erwinia pyrifoliae (strain DSM 12162 / Ep1/96).